An 81-amino-acid chain; its full sequence is Sulfur carrier protein TusA (81 aa).

Catalysis depends on C19, which acts as the Cysteine persulfide intermediate.

This sequence belongs to the sulfur carrier protein TusA family.

Its subcellular location is the cytoplasm. In terms of biological role, sulfur carrier protein which probably makes part of a sulfur-relay system. This is Sulfur carrier protein TusA from Shewanella woodyi (strain ATCC 51908 / MS32).